The primary structure comprises 256 residues: NH(3)-dependent NAD(+) synthetase (256 aa).

Residue 29–36 (GISGGIDS) coordinates ATP. Aspartate 35 is a Mg(2+) binding site. Residue arginine 115 coordinates deamido-NAD(+). Residue threonine 135 coordinates ATP. Glutamate 140 is a binding site for Mg(2+). Deamido-NAD(+) contacts are provided by lysine 148 and aspartate 155. 2 residues coordinate ATP: lysine 164 and serine 186. Residue 245–246 (HK) participates in deamido-NAD(+) binding.

The protein belongs to the NAD synthetase family. In terms of assembly, homodimer.

The catalysed reaction is deamido-NAD(+) + NH4(+) + ATP = AMP + diphosphate + NAD(+) + H(+). The protein operates within cofactor biosynthesis; NAD(+) biosynthesis; NAD(+) from deamido-NAD(+) (ammonia route): step 1/1. Catalyzes the ATP-dependent amidation of deamido-NAD to form NAD. Uses ammonia as a nitrogen source. The protein is NH(3)-dependent NAD(+) synthetase of Methanosarcina mazei (strain ATCC BAA-159 / DSM 3647 / Goe1 / Go1 / JCM 11833 / OCM 88) (Methanosarcina frisia).